The chain runs to 883 residues: Lethal(3)malignant brain tumor-like protein 3 (883 aa).

An interaction with RBPJ. Required for transcription repressor activity on Notch target genes region spans residues 1–64 (MTESASSTSG…VKKATATTTW (64 aa)). Residues 146-156 (HAKDKDQKDER) are compositionally biased toward basic and acidic residues. Residues 146 to 223 (HAKDKDQKDE…RGDSAVLKQG (78 aa)) form a disordered region. Composition is skewed to acidic residues over residues 157 to 166 (DGGEDNDEED) and 185 to 194 (DDGEERDDEM). 3 MBT repeats span residues 232–332 (WCWA…LRPP), 340–439 (FNWQ…LITP), and 448–543 (FSWD…LQAP). Residues 549-593 (LMEPSETGGCPTLGCRGVGHFKKSRYLGTQSGANCPYSEINLSKE) form a CCHHC-type; degenerate zinc finger. A disordered region spans residues 595-768 (IFPDRLSGDT…TQQQAQTQQQ (174 aa)). Residues 616–662 (KRMDTRESSSSPETREKHANNFKEDSEKKKENEVKTSAEAKVVREEP) are compositionally biased toward basic and acidic residues. A Glycyl lysine isopeptide (Lys-Gly) (interchain with G-Cter in SUMO2) cross-link involves residue lysine 638. 2 stretches are compositionally biased toward low complexity: residues 663 to 742 (TPSV…QQPQ) and 749 to 768 (QPQQ…TQQQ). An SAM domain is found at 811–875 (WSTDEVSEFI…FNSILMFKAA (65 aa)).

As to quaternary structure, interacts with RNF2. Interacts (via SAM domain) with SAMD1 (via SAM domain); the interaction mediates L3MBTL3 binding to chromatin. Interacts with RBPJ; the interaction is required for L3MBTL3 localization to chromatin and is impaired the Notch-derived peptides containing the intracellular domain (NICD). Interacts (via SAM domain) with KDM1A. Interacts with DCAF5. Interacts with DNMT1. Interacts with E2F1. Interacts with SOX2. Interacts with SFMBT1. As to expression, detected in hematopoietic progenitor cells in fetal liver. Detected in adult bone marrow, heart, brain, spleen, lung, liver, kidney and testis.

The protein resides in the nucleus. Its function is as follows. Is a negative regulator of Notch target genes expression, required for RBPJ-mediated transcriptional repression. It recruits KDM1A to Notch-responsive elements and promotes KDM1A-mediated H3K4me demethylation. Involved in the regulation of ubiquitin-dependent degradation of a set of methylated non-histone proteins, including SOX2. It acts as an adapter recruiting the CRL4-DCAF5 E3 ubiquitin ligase complex to methylated target proteins. Also involved in the regulation of ubiquitin-dependent degradation of methylated DNMT1 and E2F1. Required for normal maturation of myeloid progenitor cells. The polypeptide is Lethal(3)malignant brain tumor-like protein 3 (Mus musculus (Mouse)).